Here is a 126-residue protein sequence, read N- to C-terminus: Probable cystatin-16 (126 aa).

An N-terminal signal peptide occupies residues 1–20 (MFLKATLLLGLAVLGMHVWA). C84 and C94 are disulfide-bonded. N106 carries an N-linked (GlcNAc...) asparagine glycan.

This sequence belongs to the cystatin family.

The protein localises to the secreted. This is Probable cystatin-16 from Bos taurus (Bovine).